The chain runs to 157 residues: Ribonuclease H (157 aa).

An RNase H type-1 domain is found at 1 to 142; the sequence is MKKKIKIFID…CDFLAKISAK (142 aa). D10, E48, D70, and D134 together coordinate Mg(2+).

This sequence belongs to the RNase H family. In terms of assembly, monomer. Requires Mg(2+) as cofactor.

The protein localises to the cytoplasm. It catalyses the reaction Endonucleolytic cleavage to 5'-phosphomonoester.. In terms of biological role, endonuclease that specifically degrades the RNA of RNA-DNA hybrids. The sequence is that of Ribonuclease H from Wigglesworthia glossinidia brevipalpis.